Reading from the N-terminus, the 350-residue chain is Twinfilin-1 (350 aa).

Serine 2 bears the N-acetylserine mark. The 138-residue stretch at 2-139 (SHQTGIQASE…SLHGYKKYLL (138 aa)) folds into the ADF-H 1 domain. Phosphoserine occurs at positions 143 and 277. One can recognise an ADF-H 2 domain in the interval 175 to 313 (LQGVAFPISR…TADFLYEEVH (139 aa)). Tyrosine 309 is subject to Phosphotyrosine. The segment at 316–350 (QHAHKQSFAKPKGPAGKRGIRRLIRGPAETEATTD) is disordered. Position 349 is a phosphothreonine (threonine 349).

Belongs to the actin-binding proteins ADF family. Twinfilin subfamily. In terms of assembly, interacts with G-actin; ADP-actin form and capping protein (CP). May also be able to interact with TWF2 and phosphoinositides, PI(4,5)P2. When bound to PI(4,5)P2, it is down-regulated. Interacts with ACTG1. Post-translationally, phosphorylated on serine and threonine residues. In terms of tissue distribution, expressed at high levels in the colon, testis, ovary, prostate and lung. Expressed at lower levels in the brain, bladder and heart. Not detected in liver.

The protein resides in the cytoplasm. It is found in the cytoskeleton. Functionally, actin-binding protein involved in motile and morphological processes. Inhibits actin polymerization, likely by sequestering G-actin. By capping the barbed ends of filaments, it also regulates motility. Seems to play an important role in clathrin-mediated endocytosis and distribution of endocytic organelles. This Homo sapiens (Human) protein is Twinfilin-1 (TWF1).